Here is a 261-residue protein sequence, read N- to C-terminus: Phosphatidylglycerol--prolipoprotein diacylglyceryl transferase (261 aa).

Helical transmembrane passes span 19-39 (VHWYGLMYLVGFAMAWGLALY), 56-76 (LIFYGALGLIIGGRLGYMLFY), 92-112 (WRGGMSFHGGLIGVIVTTWIF), 126-146 (FVVPLVPLGLAAGRIGNFING), 173-193 (QLYEFLLEGVLLFIVIWWFSA), 199-219 (FAVSSLFLLCYGLFRFTAEFF), and 227-247 (GFVAFGWLTRGQELSLPMIII). Residue Arg-139 participates in a 1,2-diacyl-sn-glycero-3-phospho-(1'-sn-glycerol) binding.

This sequence belongs to the Lgt family.

It is found in the cell inner membrane. The enzyme catalyses L-cysteinyl-[prolipoprotein] + a 1,2-diacyl-sn-glycero-3-phospho-(1'-sn-glycerol) = an S-1,2-diacyl-sn-glyceryl-L-cysteinyl-[prolipoprotein] + sn-glycerol 1-phosphate + H(+). Its pathway is protein modification; lipoprotein biosynthesis (diacylglyceryl transfer). Catalyzes the transfer of the diacylglyceryl group from phosphatidylglycerol to the sulfhydryl group of the N-terminal cysteine of a prolipoprotein, the first step in the formation of mature lipoproteins. This Coxiella burnetii (strain CbuK_Q154) (Coxiella burnetii (strain Q154)) protein is Phosphatidylglycerol--prolipoprotein diacylglyceryl transferase.